Here is a 760-residue protein sequence, read N- to C-terminus: Dipeptidyl peptidase 4 (760 aa).

Over 1–6 (MKTPWK) the chain is Cytoplasmic. A helical; Signal-anchor for type II membrane protein membrane pass occupies residues 7–28 (VLLGLLGVAALVTIITVPIVLL). Residues 29–760 (SKDEAAADSR…HFLQQCFSLH (732 aa)) lie on the Extracellular side of the membrane. N-linked (GlcNAc...) asparagine glycosylation is found at asparagine 83, asparagine 90, asparagine 144, asparagine 213, asparagine 223, asparagine 315, and asparagine 328. 4 disulfide bridges follow: cysteine 322/cysteine 333, cysteine 379/cysteine 388, cysteine 438/cysteine 441, and cysteine 448/cysteine 466. An N-linked (GlcNAc...) asparagine glycan is attached at asparagine 514. The active-site Charge relay system is the serine 624. Cysteine 643 and cysteine 756 are joined by a disulfide. Asparagine 679 carries N-linked (GlcNAc...) asparagine glycosylation. Catalysis depends on charge relay system residues aspartate 702 and histidine 734.

This sequence belongs to the peptidase S9B family. DPPIV subfamily. In terms of assembly, monomer. Homodimer. Heterodimer with Seprase (FAP). Requires homodimerization for optimal dipeptidyl peptidase activity and T-cell costimulation. Found in a membrane raft complex, at least composed of BCL10, CARD11, DPP4 and IKBKB. Associates with collagen. Interacts with PTPRC; the interaction is enhanced in an interleukin-12-dependent manner in activated lymphocytes. Interacts (via extracellular domain) with ADA; does not inhibit its dipeptidyl peptidase activity. Interacts with CAV1 (via the N-terminus); the interaction is direct. Interacts (via cytoplasmic tail) with CARD11 (via PDZ domain); its homodimerization is necessary for interaction with CARD11. Interacts with IGF2R; the interaction is direct. Interacts with GPC3. In terms of processing, the soluble form (Dipeptidyl peptidase 4 soluble form also named SDPP) derives from the membrane form (Dipeptidyl peptidase 4 membrane form also named MDPP) by proteolytic processing. Post-translationally, N- and O-Glycosylated. Phosphorylated. Mannose 6-phosphate residues in the carbohydrate moiety are necessary for interaction with IGF2R in activated T-cells. Mannose 6-phosphorylation is induced during T-cell activation.

It is found in the secreted. The protein resides in the cell membrane. Its subcellular location is the apical cell membrane. It localises to the cell projection. The protein localises to the invadopodium membrane. It is found in the lamellipodium membrane. The protein resides in the cell junction. Its subcellular location is the membrane raft. The catalysed reaction is Release of an N-terminal dipeptide, Xaa-Yaa-|-Zaa-, from a polypeptide, preferentially when Yaa is Pro, provided Zaa is neither Pro nor hydroxyproline.. Its activity is regulated as follows. Inhibited by GPC3 and diprotin A. Cell surface glycoprotein receptor involved in the costimulatory signal essential for T-cell receptor (TCR)-mediated T-cell activation. Acts as a positive regulator of T-cell coactivation, by binding at least ADA, CAV1, IGF2R, and PTPRC. Its binding to CAV1 and CARD11 induces T-cell proliferation and NF-kappa-B activation in a T-cell receptor/CD3-dependent manner. Its interaction with ADA also regulates lymphocyte-epithelial cell adhesion. In association with FAP is involved in the pericellular proteolysis of the extracellular matrix (ECM), the migration and invasion of endothelial cells into the ECM. May be involved in the promotion of lymphatic endothelial cells adhesion, migration and tube formation. When overexpressed, enhanced cell proliferation, a process inhibited by GPC3. Also acts as a serine exopeptidase with a dipeptidyl peptidase activity that regulates various physiological processes by cleaving peptides in the circulation, including many chemokines, mitogenic growth factors, neuropeptides and peptide hormones. Removes N-terminal dipeptides sequentially from polypeptides having unsubstituted N-termini provided that the penultimate residue is proline. The protein is Dipeptidyl peptidase 4 (Dpp4) of Mus musculus (Mouse).